Reading from the N-terminus, the 395-residue chain is Putative gustatory receptor 93b (395 aa).

The Cytoplasmic segment spans residues 1 to 18 (MSGLLVMPRILRCLNVSR). The helical transmembrane segment at 19 to 39 (ISAILLRSCFLYGTFFGVITF) threads the bilayer. Topologically, residues 40–89 (RIERKDSQLVAINRRGYLWICLVIRLLASCFYGYSYDAWSGQYEDMYLRA) are extracellular. Residues 90–110 (FFGFRLIGCLICSVIILVMQF) traverse the membrane as a helical segment. The Cytoplasmic portion of the chain corresponds to 111–153 (WFGEELINLVNRFLQLFRRMQSLTNSPKNRFGDRAEFLLMFSK). Residues 154-174 (VFSLLFVFMAFRLMLSPWFLL) form a helical membrane-spanning segment. Residues 175-183 (TLVCDLYTS) are Extracellular-facing. A helical membrane pass occupies residues 184 to 204 (VGTGMITHLCFVGYLSIGVLY). Residues 205–267 (RDLNNYVDCQ…RSFQQLFDLP (63 aa)) are Cytoplasmic-facing. A helical transmembrane segment spans residues 268–288 (LFLSLAQSLLAMSMVSYHAIL). The Extracellular portion of the chain corresponds to 289–293 (RRQYS). Residues 294 to 314 (FNLWGLVIKLLIDVVLLTMSV) traverse the membrane as a helical segment. Topologically, residues 315–369 (HSAVNGSRLIRRLSFENFYVTDSQSYHQKLELFLGRLQHQELRVFPLGLFEVSNE) are cytoplasmic. A helical transmembrane segment spans residues 370–390 (LTLFFLSAMVTYLVFLVQYGM). Topologically, residues 391–395 (QSQQI) are extracellular.

This sequence belongs to the insect chemoreceptor superfamily. Gustatory receptor (GR) family. Gr93a subfamily. In larvae, is expressed in neurons of the terminal external chemosensory organ and of the dorsal pharyngeal sense organ.

The protein resides in the cell membrane. Its function is as follows. Probable gustatory receptor which mediates acceptance or avoidance behavior, depending on its substrates. The chain is Putative gustatory receptor 93b (Gr93b) from Drosophila melanogaster (Fruit fly).